A 484-amino-acid polypeptide reads, in one-letter code: MTLRFYDTASAEVRDFVPLEDGKASVYYCGATVQGMPHVGHVRSAIAFDQLTRWLEFRGLRVTVVRNVTDIDDKILAKSAQSFGPDWDAEPSARQTEEWWALAYRYEQEFENAYESLGVQRPTYEPRATGHIPEMHTLIQRLIDRGHAYPALDDSGDVYFDVRSWSKYGSLTRQNIDDMQGAPDADPRGKRDPRDFALWKGFKDGEPVTAKWESPWGAGRPGWHLECSAMVTKYLGPRFDIHGGGLDLRFPHHENEMAQSQAAGDEFANFWMHNGMVTYEGEKMSKSIGNTVSPAEMLELASPRVVRYYLGQAHYRSILDYRPTSLQEAAAAVERIDGFIHKASSKVGTGAPDVSPQANMPAAFIAAMDDDLNVPQALGVLHETVRAGNTALASGDLEGAKAALYSVLSMTEVLGLDSVKRPEAVQGREHAALEVLIEAQLEARAAARANKDWAASDAIRDTLAAAGVVVEDGADGATWSLKRD.

Residue cysteine 29 participates in Zn(2+) binding. A 'HIGH' region motif is present at residues 31–41 (ATVQGMPHVGH). 3 residues coordinate Zn(2+): cysteine 227, histidine 252, and glutamate 256. A 'KMSKS' region motif is present at residues 283-287 (KMSKS). ATP is bound at residue lysine 286.

This sequence belongs to the class-I aminoacyl-tRNA synthetase family. Monomer. Zn(2+) is required as a cofactor.

It is found in the cytoplasm. The catalysed reaction is tRNA(Cys) + L-cysteine + ATP = L-cysteinyl-tRNA(Cys) + AMP + diphosphate. The polypeptide is Cysteine--tRNA ligase (Paenarthrobacter aurescens (strain TC1)).